The primary structure comprises 503 residues: Maturase K (503 aa).

It belongs to the intron maturase 2 family. MatK subfamily.

It is found in the plastid. Its subcellular location is the chloroplast. Its function is as follows. Usually encoded in the trnK tRNA gene intron. Probably assists in splicing its own and other chloroplast group II introns. The chain is Maturase K from Panax quinquefolius (American ginseng).